The chain runs to 124 residues: Heat-labile enterotoxin B chain (124 aa).

A signal peptide spans 1-21 (MNKVKCYVLFTALLSSLYAHG). A disulfide bond links C30 and C107.

Heterohexamer of one A chain and of five B chains.

In terms of biological role, the biological activity of the toxin is produced by the A chain, which activates intracellular adenyl cyclase. The protein is Heat-labile enterotoxin B chain (eltB) of Escherichia coli.